Reading from the N-terminus, the 509-residue chain is Inositol-3-phosphate synthase 1 (509 aa).

The protein belongs to the myo-inositol 1-phosphate synthase family. It depends on NAD(+) as a cofactor. As to expression, highly expressed in anthers, but transcripts are undetectable in roots, leaves, flowers and embryos.

Its subcellular location is the cytoplasm. It catalyses the reaction D-glucose 6-phosphate = 1D-myo-inositol 3-phosphate. Its pathway is polyol metabolism; myo-inositol biosynthesis; myo-inositol from D-glucose 6-phosphate: step 1/2. Its function is as follows. Key enzyme in myo-inositol biosynthesis pathway that catalyzes the conversion of glucose 6-phosphate to 1-myo-inositol 1-phosphate in a NAD-dependent manner. Is a key enzyme in the phytic acid biosynthesis pathway in seeds. The sequence is that of Inositol-3-phosphate synthase 1 from Oryza sativa subsp. japonica (Rice).